The following is a 109-amino-acid chain: UPF0122 protein ABC2295 (109 aa).

Belongs to the UPF0122 family.

In terms of biological role, might take part in the signal recognition particle (SRP) pathway. This is inferred from the conservation of its genetic proximity to ftsY/ffh. May be a regulatory protein. The protein is UPF0122 protein ABC2295 of Shouchella clausii (strain KSM-K16) (Alkalihalobacillus clausii).